A 186-amino-acid chain; its full sequence is Bilin biosynthesis protein CpeZ (186 aa).

In terms of biological role, involved in the biosynthesis of bilin. In Synechococcus sp. (strain WH8020), this protein is Bilin biosynthesis protein CpeZ (cpeZ).